Here is a 377-residue protein sequence, read N- to C-terminus: Protein-arginine rhamnosyltransferase (377 aa).

Residue Tyr-15 participates in dTDP-beta-L-rhamnose binding. Asp-17 acts as the Proton acceptor in catalysis. Residues Tyr-193, Gln-255, and 271–275 (RGEDS) contribute to the dTDP-beta-L-rhamnose site. Glu-273 is a catalytic residue.

This sequence belongs to the glycosyltransferase 104 family.

It carries out the reaction dTDP-beta-L-rhamnose + L-arginyl-[protein] = N(omega)-(alpha-L-rhamnosyl)-L-arginyl-[protein] + dTDP + H(+). In terms of biological role, protein-arginine rhamnosyltransferase that catalyzes the transfer of a single rhamnose to elongation factor P (EF-P) on 'Lys-32', a modification required for EF-P-dependent rescue of polyproline stalled ribosomes. In Pseudomonas putida (strain ATCC 47054 / DSM 6125 / CFBP 8728 / NCIMB 11950 / KT2440), this protein is Protein-arginine rhamnosyltransferase.